The sequence spans 318 residues: Acetyl-coenzyme A carboxylase carboxyl transferase subunit alpha (318 aa).

The CoA carboxyltransferase C-terminal domain occupies 41-295 (HLEKKNEELT…KQRILTDLNE (255 aa)).

It belongs to the AccA family. In terms of assembly, acetyl-CoA carboxylase is a heterohexamer composed of biotin carboxyl carrier protein (AccB), biotin carboxylase (AccC) and two subunits each of ACCase subunit alpha (AccA) and ACCase subunit beta (AccD).

It is found in the cytoplasm. The catalysed reaction is N(6)-carboxybiotinyl-L-lysyl-[protein] + acetyl-CoA = N(6)-biotinyl-L-lysyl-[protein] + malonyl-CoA. It participates in lipid metabolism; malonyl-CoA biosynthesis; malonyl-CoA from acetyl-CoA: step 1/1. In terms of biological role, component of the acetyl coenzyme A carboxylase (ACC) complex. First, biotin carboxylase catalyzes the carboxylation of biotin on its carrier protein (BCCP) and then the CO(2) group is transferred by the carboxyltransferase to acetyl-CoA to form malonyl-CoA. This chain is Acetyl-coenzyme A carboxylase carboxyl transferase subunit alpha, found in Tolumonas auensis (strain DSM 9187 / NBRC 110442 / TA 4).